Reading from the N-terminus, the 843-residue chain is Protein P (843 aa).

The tract at residues 1 to 177 is terminal protein domain (TP); the sequence is MPLSYQHFRK…FCGSPYSWEQ (177 aa). A spacer region spans residues 178–346; that stretch reads ELQHGRLVFQ…YCLSHLINLH (169 aa). Disordered stretches follow at residues 218-243 and 291-315; these read LKQS…SGSI and TAQR…AGSQ. Residues 347 to 690 are polymerase/reverse transcriptase domain (RT); it reads EDWGPCIEHG…YLNLYPVARQ (344 aa). One can recognise a Reverse transcriptase domain in the interval 357–600; sequence EHNIRIPRTP…YSLNFMGYVI (244 aa). Positions 429, 551, and 552 each coordinate Mg(2+).

This sequence belongs to the hepadnaviridae P protein family.

It catalyses the reaction DNA(n) + a 2'-deoxyribonucleoside 5'-triphosphate = DNA(n+1) + diphosphate. The enzyme catalyses Endonucleolytic cleavage to 5'-phosphomonoester.. Its activity is regulated as follows. Activated by host HSP70 and HSP40 in vitro to be able to bind the epsilon loop of the pgRNA. Because deletion of the RNase H region renders the protein partly chaperone-independent, the chaperones may be needed indirectly to relieve occlusion of the RNA-binding site by this domain. Inhibited by several reverse-transcriptase inhibitors: Lamivudine, Adefovir and Entecavir. Functionally, multifunctional enzyme that converts the viral RNA genome into dsDNA in viral cytoplasmic capsids. This enzyme displays a DNA polymerase activity that can copy either DNA or RNA templates, and a ribonuclease H (RNase H) activity that cleaves the RNA strand of RNA-DNA heteroduplexes in a partially processive 3'- to 5'-endonucleasic mode. Neo-synthesized pregenomic RNA (pgRNA) are encapsidated together with the P protein, and reverse-transcribed inside the nucleocapsid. Initiation of reverse-transcription occurs first by binding the epsilon loop on the pgRNA genome, and is initiated by protein priming, thereby the 5'-end of (-)DNA is covalently linked to P protein. Partial (+)DNA is synthesized from the (-)DNA template and generates the relaxed circular DNA (RC-DNA) genome. After budding and infection, the RC-DNA migrates in the nucleus, and is converted into a plasmid-like covalently closed circular DNA (cccDNA). The activity of P protein does not seem to be necessary for cccDNA generation, and is presumably released from (+)DNA by host nuclear DNA repair machinery. The chain is Protein P from Hepatitis B virus genotype C subtype ayw (isolate Australia/AustRC/1992) (HBV-C).